The following is a 275-amino-acid chain: Bis(5'-nucleosyl)-tetraphosphatase, symmetrical (275 aa).

This sequence belongs to the Ap4A hydrolase family.

It catalyses the reaction P(1),P(4)-bis(5'-adenosyl) tetraphosphate + H2O = 2 ADP + 2 H(+). Functionally, hydrolyzes diadenosine 5',5'''-P1,P4-tetraphosphate to yield ADP. This chain is Bis(5'-nucleosyl)-tetraphosphatase, symmetrical, found in Actinobacillus succinogenes (strain ATCC 55618 / DSM 22257 / CCUG 43843 / 130Z).